The sequence spans 971 residues: Translation initiation factor IF-2 (971 aa).

A compositionally biased stretch (basic and acidic residues) spans 48 to 63 (DHLRKSHGATDGDKRK). 2 disordered regions span residues 48–86 (DHLR…ARTI) and 100–381 (DDVA…STFQ). Over residues 105-114 (GADQGQAQVA) the composition is skewed to low complexity. The span at 121-181 (ELKRREEEAR…EEEAATKRAA (61 aa)) shows a compositional bias: basic and acidic residues. Over residues 182 to 202 (AEVAAAQQQAAAQQAAAEQEA) the composition is skewed to low complexity. The segment covering 210–261 (DEARAAAERAAQREAAKKAEDAAREAADKARAEQEEISKRRAAAEAEARAIR) has biased composition (basic and acidic residues). Residues 277–286 (PPKPVEPPKP) are compositionally biased toward pro residues. The span at 304-326 (ARPAVKKPAGAAAPATTQAPAGA) shows a compositional bias: low complexity. Residues 356 to 369 (SSGGVDRGWRGGPK) are compositionally biased toward gly residues. In terms of domain architecture, tr-type G spans 471–640 (PRPPVVTVMG…LLQAEVLELK (170 aa)). Residues 480 to 487 (GHVDHGKT) form a G1 region. 480-487 (GHVDHGKT) contributes to the GTP binding site. The G2 stretch occupies residues 505–509 (GITQH). The tract at residues 526-529 (DTPG) is G3. Residues 526 to 530 (DTPGH) and 580 to 583 (NKID) each bind GTP. The interval 580–583 (NKID) is G4. The tract at residues 616–618 (SAK) is G5.

It belongs to the TRAFAC class translation factor GTPase superfamily. Classic translation factor GTPase family. IF-2 subfamily.

It is found in the cytoplasm. One of the essential components for the initiation of protein synthesis. Protects formylmethionyl-tRNA from spontaneous hydrolysis and promotes its binding to the 30S ribosomal subunits. Also involved in the hydrolysis of GTP during the formation of the 70S ribosomal complex. The sequence is that of Translation initiation factor IF-2 from Burkholderia orbicola (strain AU 1054).